The chain runs to 238 residues: Aspartate/glutamate leucyltransferase (238 aa).

It belongs to the R-transferase family. Bpt subfamily.

It is found in the cytoplasm. It carries out the reaction N-terminal L-glutamyl-[protein] + L-leucyl-tRNA(Leu) = N-terminal L-leucyl-L-glutamyl-[protein] + tRNA(Leu) + H(+). The enzyme catalyses N-terminal L-aspartyl-[protein] + L-leucyl-tRNA(Leu) = N-terminal L-leucyl-L-aspartyl-[protein] + tRNA(Leu) + H(+). Its function is as follows. Functions in the N-end rule pathway of protein degradation where it conjugates Leu from its aminoacyl-tRNA to the N-termini of proteins containing an N-terminal aspartate or glutamate. This Shewanella sp. (strain ANA-3) protein is Aspartate/glutamate leucyltransferase.